The sequence spans 199 residues: uncharacterized protein (199 aa).

The 132-residue stretch at 38–169 (NRRAAVLIPI…SLDIHREGIN (132 aa)) folds into the Nudix hydrolase domain. Residues 76–98 (GKADPDDQSLISTALREAEEEVA) carry the Nudix box motif. Mg(2+) contacts are provided by Glu-92 and Glu-96.

The protein belongs to the Nudix hydrolase family. PCD1 subfamily. It depends on Mn(2+) as a cofactor. Mg(2+) serves as cofactor.

Probably mediates the hydrolysis of some nucleoside diphosphate derivatives. This is an uncharacterized protein from Yersinia pseudotuberculosis serotype I (strain IP32953).